The primary structure comprises 355 residues: Glutamyl aminopeptidase (355 aa).

Positions 65 and 181 each coordinate a divalent metal cation. Glutamate 213 functions as the Proton acceptor in the catalytic mechanism. A divalent metal cation-binding residues include glutamate 214, aspartate 236, and histidine 319.

This sequence belongs to the peptidase M42 family. A divalent metal cation serves as cofactor.

It carries out the reaction Release of N-terminal glutamate (and to a lesser extent aspartate) from a peptide.. In Lactococcus lactis subsp. cremoris (strain MG1363), this protein is Glutamyl aminopeptidase (pepA).